Here is a 376-residue protein sequence, read N- to C-terminus: N-acetyldiaminopimelate deacetylase (376 aa).

Asp-69 is an active-site residue. Glu-128 functions as the Proton acceptor in the catalytic mechanism.

This sequence belongs to the peptidase M20A family. N-acetyldiaminopimelate deacetylase subfamily.

The catalysed reaction is N-acetyl-(2S,6S)-2,6-diaminopimelate + H2O = (2S,6S)-2,6-diaminopimelate + acetate. It participates in amino-acid biosynthesis; L-lysine biosynthesis via DAP pathway; LL-2,6-diaminopimelate from (S)-tetrahydrodipicolinate (acetylase route): step 3/3. Catalyzes the conversion of N-acetyl-diaminopimelate to diaminopimelate and acetate. This Bacillus cereus (strain G9842) protein is N-acetyldiaminopimelate deacetylase.